The following is a 485-amino-acid chain: Cysteine--tRNA ligase (485 aa).

Cysteine 28 serves as a coordination point for Zn(2+). A 'HIGH' region motif is present at residues 30 to 40 (MTVYDLCHVGH). Residues cysteine 209, histidine 234, and glutamate 238 each coordinate Zn(2+). The 'KMSKS' region signature appears at 266-270 (KMSKS). Lysine 269 lines the ATP pocket.

Belongs to the class-I aminoacyl-tRNA synthetase family. Monomer. It depends on Zn(2+) as a cofactor.

Its subcellular location is the cytoplasm. The catalysed reaction is tRNA(Cys) + L-cysteine + ATP = L-cysteinyl-tRNA(Cys) + AMP + diphosphate. This is Cysteine--tRNA ligase from Nitrosococcus oceani (strain ATCC 19707 / BCRC 17464 / JCM 30415 / NCIMB 11848 / C-107).